We begin with the raw amino-acid sequence, 283 residues long: Pantothenate synthetase (283 aa).

30–37 (MGNLHDAH) lines the ATP pocket. Catalysis depends on His-37, which acts as the Proton donor. A (R)-pantoate-binding site is contributed by Gln-61. Gln-61 contacts beta-alanine. 149 to 152 (GVKD) serves as a coordination point for ATP. Gln-155 is a binding site for (R)-pantoate. Residues Val-178 and 186 to 189 (MSSR) each bind ATP.

Belongs to the pantothenate synthetase family. Homodimer.

Its subcellular location is the cytoplasm. The enzyme catalyses (R)-pantoate + beta-alanine + ATP = (R)-pantothenate + AMP + diphosphate + H(+). It participates in cofactor biosynthesis; (R)-pantothenate biosynthesis; (R)-pantothenate from (R)-pantoate and beta-alanine: step 1/1. Catalyzes the condensation of pantoate with beta-alanine in an ATP-dependent reaction via a pantoyl-adenylate intermediate. This Cellvibrio japonicus (strain Ueda107) (Pseudomonas fluorescens subsp. cellulosa) protein is Pantothenate synthetase.